A 155-amino-acid chain; its full sequence is Large ribosomal subunit protein uL22c (155 aa).

Belongs to the universal ribosomal protein uL22 family. In terms of assembly, part of the 50S ribosomal subunit.

It is found in the plastid. It localises to the chloroplast. This protein binds specifically to 23S rRNA. Functionally, the globular domain of the protein is located near the polypeptide exit tunnel on the outside of the subunit, while an extended beta-hairpin is found that lines the wall of the exit tunnel in the center of the 70S ribosome. This is Large ribosomal subunit protein uL22c (rpl22) from Atropa belladonna (Belladonna).